The sequence spans 882 residues: Bifunctional heparan sulfate N-deacetylase/N-sulfotransferase 1 (882 aa).

Topologically, residues 1 to 17 are cytoplasmic; sequence MPALACLRRLCRHLSPQ. The segment at 1–169 is sufficient for localization to Golgi membrane; sequence MPALACLRRL…VAYGVGIIGF (169 aa). The helical; Signal-anchor for type II membrane protein transmembrane segment at 18–38 threads the bilayer; sequence AVLFLLFVFCLFSVFVSAYYL. At 39 to 882 the chain is on the lumenal side; the sequence is YGWNRGLEPS…WLREDLQNTR (844 aa). The interval 40–598 is heparan sulfate N-deacetylase 1; the sequence is GWNRGLEPSA…KRHKDIWSKE (559 aa). Residues N231, N351, and N401 are each glycosylated (N-linked (GlcNAc...) asparagine). A heparan sulfate N-sulfotransferase 1 region spans residues 599 to 882; the sequence is KTCDRFPKLL…WLREDLQNTR (284 aa). Catalysis depends on K614, which acts as the For sulfotransferase activity. 614–618 is an adenosine 3',5'-bisphosphate binding site; it reads KTGTT. N-linked (GlcNAc...) asparagine glycosylation occurs at N667. The adenosine 3',5'-bisphosphate site is built by S712 and W817. A disulfide bond links C818 and C828. Position 833–837 (833–837) interacts with adenosine 3',5'-bisphosphate; the sequence is KGRKY.

The protein belongs to the sulfotransferase 1 family. NDST subfamily. Monomer. Interacts with heparan sulfate co-polymerase subunits EXT1 and EXT2. In terms of tissue distribution, widely expressed in adult and throughout development.

Its subcellular location is the golgi apparatus membrane. The protein resides in the golgi apparatus. It is found in the trans-Golgi network membrane. The protein localises to the cis-Golgi network membrane. The enzyme catalyses N-acetyl-alpha-D-glucosaminyl-[heparan sulfate](n) + H2O = alpha-D-glucosaminyl-[heparan sulfate](n) + acetate. The catalysed reaction is alpha-D-glucosaminyl-[heparan sulfate](n) + 3'-phosphoadenylyl sulfate = N-sulfo-alpha-D-glucosaminyl-[heparan sulfate](n) + adenosine 3',5'-bisphosphate + 2 H(+). Its pathway is glycan metabolism; heparan sulfate biosynthesis. It functions in the pathway glycan metabolism; heparin biosynthesis. Its activity is regulated as follows. Inhibited by long N-sulfated sequences (more than 6 sugar residues) accumulating in its substrates heparan sulfate, and heparin. In terms of biological role, essential bifunctional enzyme that catalyzes both the N-deacetylation and the N-sulfation of glucosamine (GlcNAc) of the glycosaminoglycan in heparan sulfate. Modifies the GlcNAc-GlcA disaccharide repeating sugar backbone to make N-sulfated heparosan, a prerequisite substrate for later modifications in heparin biosynthesis. Plays a role in determining the extent and pattern of sulfation of heparan sulfate. Participates in biosynthesis of heparan sulfate that can ultimately serve as L-selectin ligands, thereby playing a role in inflammatory response. Required for the exosomal release of SDCBP, CD63 and syndecan. The sequence is that of Bifunctional heparan sulfate N-deacetylase/N-sulfotransferase 1 from Mus musculus (Mouse).